The sequence spans 373 residues: Ubiquitin carboxyl-terminal hydrolase 50 (373 aa).

Residues 44-364 enclose the USP domain; the sequence is TGLRNLGNTC…TAYLLFYSCQ (321 aa). Cysteine 53 (nucleophile) is an active-site residue. Residue histidine 322 is the Proton acceptor of the active site.

This sequence belongs to the peptidase C19 family.

It localises to the cytoplasm. The protein localises to the cytoskeleton. The protein resides in the microtubule organizing center. It is found in the centrosome. Its subcellular location is the nucleus. It carries out the reaction Thiol-dependent hydrolysis of ester, thioester, amide, peptide and isopeptide bonds formed by the C-terminal Gly of ubiquitin (a 76-residue protein attached to proteins as an intracellular targeting signal).. Functionally, deubiquitinating enzyme that removes conjugated ubiquitin from specific proteins to regulate different cellular processes. Regulates the inflammasome signaling pathway by deubiquitinating 'Lys-63'-linked polyubiquitination of the PYCARD/ASC adapter protein. Regulates the ubiquitination and stability of the ACE2 protein. Acts as a negative regulator of the G2/M checkpoint pathway, by preventing serine/threonine kinase WEE1 degradation, thereby repressing entry into mitosis following activation of the G2/M DNA damage checkpoint. This Macaca fascicularis (Crab-eating macaque) protein is Ubiquitin carboxyl-terminal hydrolase 50 (USP50).